The chain runs to 84 residues: MNKEEIIKEFQIHEGDTGSTEVQIALLTARIKHLTEHLKKHPKDYHSRRGLMKLVGRRRKILKYLRNKDPESYKNVIQKLGLRK.

Belongs to the universal ribosomal protein uS15 family. As to quaternary structure, part of the 30S ribosomal subunit. Forms a bridge to the 50S subunit in the 70S ribosome, contacting the 23S rRNA.

Functionally, one of the primary rRNA binding proteins, it binds directly to 16S rRNA where it helps nucleate assembly of the platform of the 30S subunit by binding and bridging several RNA helices of the 16S rRNA. Its function is as follows. Forms an intersubunit bridge (bridge B4) with the 23S rRNA of the 50S subunit in the ribosome. The protein is Small ribosomal subunit protein uS15 of Thermosipho africanus (strain TCF52B).